Reading from the N-terminus, the 156-residue chain is Small ribosomal subunit protein uS7 (156 aa).

It belongs to the universal ribosomal protein uS7 family. As to quaternary structure, part of the 30S ribosomal subunit. Contacts proteins S9 and S11.

Functionally, one of the primary rRNA binding proteins, it binds directly to 16S rRNA where it nucleates assembly of the head domain of the 30S subunit. Is located at the subunit interface close to the decoding center, probably blocks exit of the E-site tRNA. In Listeria innocua serovar 6a (strain ATCC BAA-680 / CLIP 11262), this protein is Small ribosomal subunit protein uS7.